A 546-amino-acid polypeptide reads, in one-letter code: CTP synthase (546 aa).

The amidoligase domain stretch occupies residues 1–267 (MTKFIFVTGG…AEQVLDILQL (267 aa)). Residue S13 participates in CTP binding. S13 contributes to the UTP binding site. Position 14 to 19 (14 to 19 (SIGKGI)) interacts with ATP. Y54 provides a ligand contact to L-glutamine. D71 provides a ligand contact to ATP. Residues D71 and E141 each contribute to the Mg(2+) site. CTP contacts are provided by residues 148-150 (DIE), 188-193 (KTKPTQ), and K224. Residues 188–193 (KTKPTQ) and K224 each bind UTP. Positions 292 to 534 (EVAIVGKYVR…IKAALGSDLT (243 aa)) constitute a Glutamine amidotransferase type-1 domain. G354 serves as a coordination point for L-glutamine. C381 serves as the catalytic Nucleophile; for glutamine hydrolysis. Residues 382–385 (LGMQ), E405, and R462 contribute to the L-glutamine site. Residues H507 and E509 contribute to the active site.

This sequence belongs to the CTP synthase family. As to quaternary structure, homotetramer.

It catalyses the reaction UTP + L-glutamine + ATP + H2O = CTP + L-glutamate + ADP + phosphate + 2 H(+). The enzyme catalyses L-glutamine + H2O = L-glutamate + NH4(+). It carries out the reaction UTP + NH4(+) + ATP = CTP + ADP + phosphate + 2 H(+). The protein operates within pyrimidine metabolism; CTP biosynthesis via de novo pathway; CTP from UDP: step 2/2. Its activity is regulated as follows. Allosterically activated by GTP, when glutamine is the substrate; GTP has no effect on the reaction when ammonia is the substrate. The allosteric effector GTP functions by stabilizing the protein conformation that binds the tetrahedral intermediate(s) formed during glutamine hydrolysis. Inhibited by the product CTP, via allosteric rather than competitive inhibition. Functionally, catalyzes the ATP-dependent amination of UTP to CTP with either L-glutamine or ammonia as the source of nitrogen. Regulates intracellular CTP levels through interactions with the four ribonucleotide triphosphates. In Synechococcus sp. (strain ATCC 27144 / PCC 6301 / SAUG 1402/1) (Anacystis nidulans), this protein is CTP synthase.